A 325-amino-acid chain; its full sequence is NADH-quinone oxidoreductase subunit H (325 aa).

The next 8 membrane-spanning stretches (helical) occupy residues 11–31 (ILLT…CGAF), 81–101 (VIFT…FAIV), 114–134 (IGIL…LFAG), 154–174 (LSYE…AGSF), 186–206 (VWNV…GVAV), 237–257 (FFVG…TLFF), 265–285 (LPPF…FILI), and 304–324 (ICLP…LWQA).

Belongs to the complex I subunit 1 family. NDH-1 is composed of 13 different subunits. Subunits NuoA, H, J, K, L, M, N constitute the membrane sector of the complex.

Its subcellular location is the cell inner membrane. The catalysed reaction is a quinone + NADH + 5 H(+)(in) = a quinol + NAD(+) + 4 H(+)(out). Functionally, NDH-1 shuttles electrons from NADH, via FMN and iron-sulfur (Fe-S) centers, to quinones in the respiratory chain. The immediate electron acceptor for the enzyme in this species is believed to be ubiquinone. Couples the redox reaction to proton translocation (for every two electrons transferred, four hydrogen ions are translocated across the cytoplasmic membrane), and thus conserves the redox energy in a proton gradient. This subunit may bind ubiquinone. The protein is NADH-quinone oxidoreductase subunit H of Escherichia coli O45:K1 (strain S88 / ExPEC).